A 207-amino-acid polypeptide reads, in one-letter code: Cilia- and flagella-associated protein 418 (207 aa).

The segment at 1–75 (MAEDLDELLD…LINEILEEPN (75 aa)) is required for interaction with FAM161A. Residues 26 to 52 (MVEQPKGCGGGTHSSDRNQAKAKETLR) are disordered. The span at 39–52 (SSDRNQAKAKETLR) shows a compositional bias: basic and acidic residues.

Interacts (via N-terminus) with FAM161A (via central region); the interaction is direct. In terms of tissue distribution, widely expressed, with highest levels in heart and brain. Also expressed in the retina (at protein level).

It is found in the cytoplasm. Its subcellular location is the photoreceptor inner segment. In terms of biological role, may be involved in photoreceptor outer segment disk morphogenesis. This chain is Cilia- and flagella-associated protein 418, found in Homo sapiens (Human).